The following is a 694-amino-acid chain: Protein NPGR1 (694 aa).

A disordered region spans residues phenylalanine 12–aspartate 40. 9 TPR repeats span residues leucine 32 to tyrosine 65, glutamate 66 to isoleucine 101, leucine 135 to alanine 168, glutamine 188 to leucine 221, glycine 307 to arginine 340, threonine 551 to serine 584, proline 585 to histidine 618, proline 620 to asparagine 654, and histidine 655 to alanine 688.

In terms of assembly, interacts with calmodulin in a calcium-dependent manner. Expressed in pollen, flowers, fruits and leaves.

This Arabidopsis thaliana (Mouse-ear cress) protein is Protein NPGR1.